Here is a 460-residue protein sequence, read N- to C-terminus: MSRTLTSRQAEELHKSIIAYLAANNLQDSANAMRTELGLGEDAFDTATAKKYETLLEKKWTSVVRLQKKIMDLEAQTQTLQTELNSATPTSNRRGDPSSWLPAGPPRHVLQSHRTPINCVAFHPIFSSIASGDEDATIKIWDWEFGELERTVKGHTKAVLDLDYGGPKGHTLLASCSSDLTIKLWDPANEYQNIRTLPGHDHSVSAVRFIPSGAPGAPLSGNLLASASRDVTVRIWDVTTGYCVKTIRGHADWIRDVSPSLDGKYLLSTGNDRTVRLWDISVPNPEAKLVMIGHEHFVECCTFAPPAAYSHLATLAGVKKPPPASSTAEFMATGGRDKTIRLWDGRGNCIKTLIGHDNWVRGLVFHPSGKFLLSVSDDKTIRCWDLSQEGKCVKTVEGSHEHFITSLRWAPPIIKDKGPGEETNGDVGTPKKAATAPQDVQIRCVIATGSVDMSLRIFSR.

The LisH domain maps to 9-41 (QAEELHKSIIAYLAANNLQDSANAMRTELGLGE). Positions 61-88 (TSVVRLQKKIMDLEAQTQTLQTELNSAT) form a coiled coil. The span at 82–92 (TELNSATPTSN) shows a compositional bias: polar residues. A disordered region spans residues 82–105 (TELNSATPTSNRRGDPSSWLPAGP). 7 WD repeats span residues 112 to 153 (SHRT…RTVK), 155 to 195 (HTKA…QNIR), 199 to 246 (GHDH…CVKT), 249 to 288 (GHAD…PEAK), 293 to 354 (GHEH…KTLI), 355 to 394 (GHDN…KCVK), and 399 to 456 (SHEH…MSLR). Residues 414-433 (IKDKGPGEETNGDVGTPKKA) are disordered.

The protein belongs to the WD repeat LIS1/nudF family. Self-associates. Interacts with NDL1 and dynein.

The protein localises to the cytoplasm. Its subcellular location is the cytoskeleton. It is found in the spindle pole. In terms of biological role, positively regulates the activity of the minus-end directed microtubule motor protein dynein. May enhance dynein-mediated microtubule sliding by targeting dynein to the microtubule plus end. Required for nuclear migration during vegetative growth as well as development. Required for retrograde early endosome (EE) transport from the hyphal tip. Required for localization of dynein to the mitotic spindle poles. Recruits additional proteins to the dynein complex at SPBs. This Gibberella zeae (strain ATCC MYA-4620 / CBS 123657 / FGSC 9075 / NRRL 31084 / PH-1) (Wheat head blight fungus) protein is Nuclear distribution protein PAC1.